The chain runs to 513 residues: 2-isopropylmalate synthase (513 aa).

One can recognise a Pyruvate carboxyltransferase domain in the interval 7 to 269 (VYIFDTTLRD…TTGIVTEELF (263 aa)). Mn(2+)-binding residues include Asp-16, His-204, His-206, and Asn-240. The tract at residues 393–513 (ALQFLSVHCG…KEEERTCPQL (121 aa)) is regulatory domain.

It belongs to the alpha-IPM synthase/homocitrate synthase family. LeuA type 1 subfamily. As to quaternary structure, homodimer. The cofactor is Mn(2+).

It localises to the cytoplasm. The catalysed reaction is 3-methyl-2-oxobutanoate + acetyl-CoA + H2O = (2S)-2-isopropylmalate + CoA + H(+). Its pathway is amino-acid biosynthesis; L-leucine biosynthesis; L-leucine from 3-methyl-2-oxobutanoate: step 1/4. Catalyzes the condensation of the acetyl group of acetyl-CoA with 3-methyl-2-oxobutanoate (2-ketoisovalerate) to form 3-carboxy-3-hydroxy-4-methylpentanoate (2-isopropylmalate). The sequence is that of 2-isopropylmalate synthase from Solidesulfovibrio magneticus (strain ATCC 700980 / DSM 13731 / RS-1) (Desulfovibrio magneticus).